The sequence spans 466 residues: CBL-interacting protein kinase 20 (466 aa).

The Protein kinase domain maps to 12–276 (YELGRSLGHG…IDELVKHPWF (265 aa)). ATP is bound by residues 18 to 26 (LGHGTFSKV) and Lys41. Catalysis depends on Asp139, which acts as the Proton acceptor. The interval 162–191 (DFGLSALSASRRHDGLLHTTCGTPSYVAPE) is activation loop. An NAF domain is found at 297–329 (KPANAAMNMKPASLNAFDIISLSQGFDLSGMFC). The tract at residues 337 to 366 (TQDQLFVTGKPATAIVSRLEEIAETEHFTV) is PPI. Residues 446–466 (ASEKNQLPAVSEVSPLSSPRN) are disordered.

This sequence belongs to the protein kinase superfamily. CAMK Ser/Thr protein kinase family. SNF1 subfamily. Requires Mn(2+) as cofactor.

The catalysed reaction is L-seryl-[protein] + ATP = O-phospho-L-seryl-[protein] + ADP + H(+). It carries out the reaction L-threonyl-[protein] + ATP = O-phospho-L-threonyl-[protein] + ADP + H(+). CIPK serine-threonine protein kinases interact with CBL proteins. Binding of a CBL protein to the regulatory NAF domain of CIPK protein lead to the activation of the kinase in a calcium-dependent manner. The sequence is that of CBL-interacting protein kinase 20 (CIPK20) from Oryza sativa subsp. japonica (Rice).